Here is a 328-residue protein sequence, read N- to C-terminus: MLEDYYPSTTSYYHGGIDDDLYTAKWGMVMTFLDLNDSSLTPFEGTHFALIGFKSDKGVYINNGRVGAVESPAAIRTQLAKFPWHLGNQVMVYDVGNIDGPNRSLEQLQNSLSKAIKRMCDLNLKPIVLGGGHETAYGHYLGLRQSLSPSDDLAVINMDAHFDLRPYDQTGPNSGTGFRQMFDDAVADKRLFKYFVLGIQEHNNNLFLFDFVAKSKGIQFLTGQDIYQMGHQKVCRAIDRFLEGQERVYLTIDMDCFSVGAAPGVSAIQSLGVDPNLAVLVLQHIAASGKLVGFDVVEVSPPHDIDNHTANLAATFIFYLVQIMAQHN.

Mn(2+) is bound by residues histidine 133, aspartate 159, histidine 161, aspartate 163, aspartate 253, and aspartate 255.

The protein belongs to the arginase family. Mn(2+) is required as a cofactor.

The catalysed reaction is N-formimidoyl-L-glutamate + H2O = formamide + L-glutamate. The protein operates within amino-acid degradation; L-histidine degradation into L-glutamate; L-glutamate from N-formimidoyl-L-glutamate (hydrolase route): step 1/1. In terms of biological role, catalyzes the conversion of N-formimidoyl-L-glutamate to L-glutamate and formamide. The polypeptide is Formimidoylglutamase (Streptococcus pyogenes serotype M28 (strain MGAS6180)).